The following is a 188-amino-acid chain: FMN-dependent NADPH-azoreductase (188 aa).

This sequence belongs to the azoreductase type 2 family. As to quaternary structure, homotetramer. It depends on FMN as a cofactor.

Functionally, catalyzes the reductive cleavage of azo bond in aromatic azo compounds to the corresponding amines. Requires NADPH, but not NADH, as an electron donor for its activity. The sequence is that of FMN-dependent NADPH-azoreductase (azo1) from Staphylococcus epidermidis (strain ATCC 12228 / FDA PCI 1200).